The following is a 107-amino-acid chain: UPF0045 protein in glkA 3'region (107 aa).

This sequence belongs to the UPF0045 family.

This chain is UPF0045 protein in glkA 3'region (dglA), found in Staphylococcus xylosus.